Reading from the N-terminus, the 204-residue chain is Isochorismatase domain-containing protein 2 (204 aa).

Belongs to the isochorismatase family. As to quaternary structure, interacts with CDKN2A.

It localises to the cytoplasm. The protein localises to the nucleus. The protein is Isochorismatase domain-containing protein 2 (ISOC2) of Bos taurus (Bovine).